Here is a 303-residue protein sequence, read N- to C-terminus: Probable 5-dehydro-4-deoxyglucarate dehydratase (303 aa).

It belongs to the DapA family.

The catalysed reaction is 5-dehydro-4-deoxy-D-glucarate + H(+) = 2,5-dioxopentanoate + CO2 + H2O. The protein operates within carbohydrate acid metabolism; D-glucarate degradation; 2,5-dioxopentanoate from D-glucarate: step 2/2. The chain is Probable 5-dehydro-4-deoxyglucarate dehydratase from Polaromonas naphthalenivorans (strain CJ2).